The sequence spans 999 residues: Disks large-associated protein 1 (999 aa).

Disordered regions lie at residues 155 to 213 (HSLE…GYWS), 395 to 418 (MAED…ARRA), and 918 to 989 (NWRP…DSIE). Basic and acidic residues predominate over residues 194–204 (RERCKSAEPKN). Basic and acidic residues-rich tracts occupy residues 923–932 (DPPERKERRL) and 947–965 (LARD…EARK). Residues 976 to 985 (VRQNSATESA) are compositionally biased toward polar residues. Positions 997-999 (TRL) match the PDZ-binding motif.

This sequence belongs to the SAPAP family.

The protein localises to the cell membrane. It localises to the postsynaptic density. It is found in the synapse. In terms of biological role, part of the postsynaptic scaffold in neuronal cells. The sequence is that of Disks large-associated protein 1 from Danio rerio (Zebrafish).